We begin with the raw amino-acid sequence, 341 residues long: HTH-type transcriptional repressor PurR (341 aa).

Residues 2–56 (ATIKDVAKHAGVSTTTVSHVINKTRFVAEDTKAAVWAAIKALNYSPSAVARSLKV) enclose the HTH lacI-type domain. A DNA-binding region (H-T-H motif) is located at residues 4–23 (IKDVAKHAGVSTTTVSHVIN). Residues 48–56 (SAVARSLKV) mediate DNA binding. Residues Tyr73, Arg190, Thr192, Phe221, and Asp275 each contribute to the hypoxanthine site.

Homodimer.

It participates in purine metabolism; purine nucleotide biosynthesis [regulation]. Its function is as follows. Is the main repressor of the genes involved in the de novo synthesis of purine nucleotides, regulating purB, purC, purEK, purF, purHD, purL, purMN and guaBA expression. PurR is allosterically activated to bind its cognate DNA by binding the purine corepressors, hypoxanthine or guanine, thereby effecting transcription repression. This chain is HTH-type transcriptional repressor PurR, found in Photorhabdus laumondii subsp. laumondii (strain DSM 15139 / CIP 105565 / TT01) (Photorhabdus luminescens subsp. laumondii).